We begin with the raw amino-acid sequence, 502 residues long: ATP synthase subunit alpha (502 aa).

The tract at residues Val-115–Met-137 is disordered. Gly-169–Thr-176 serves as a coordination point for ATP.

This sequence belongs to the ATPase alpha/beta chains family. F-type ATPases have 2 components, CF(1) - the catalytic core - and CF(0) - the membrane proton channel. CF(1) has five subunits: alpha(3), beta(3), gamma(1), delta(1), epsilon(1). CF(0) has three main subunits: a(1), b(2) and c(9-12). The alpha and beta chains form an alternating ring which encloses part of the gamma chain. CF(1) is attached to CF(0) by a central stalk formed by the gamma and epsilon chains, while a peripheral stalk is formed by the delta and b chains.

The protein localises to the cell membrane. The catalysed reaction is ATP + H2O + 4 H(+)(in) = ADP + phosphate + 5 H(+)(out). Functionally, produces ATP from ADP in the presence of a proton gradient across the membrane. The alpha chain is a regulatory subunit. This is ATP synthase subunit alpha from Geobacillus stearothermophilus (Bacillus stearothermophilus).